The sequence spans 498 residues: Cytochrome P450 71D15 (498 aa).

The chain crosses the membrane as a helical; Signal-anchor for type II membrane protein span at residues 3-23 (LLQLWSALIILVVTYTISLLI). Cys-437 contacts heme.

This sequence belongs to the cytochrome P450 family. It depends on heme as a cofactor.

Its subcellular location is the endoplasmic reticulum membrane. It catalyses the reaction (4S)-limonene + reduced [NADPH--hemoprotein reductase] + O2 = (1S,6R)-isopiperitenol + oxidized [NADPH--hemoprotein reductase] + H2O + H(+). Functionally, hydroxylates (-)-(4S)-limonene to (-)-trans-isopiperitenol, a precursor of (-)-menthol, responsible for the cooling sensation of peppermint. Fluorinated substrate analogs are hydroxylated with the same regio- and stereochemistry. The polypeptide is Cytochrome P450 71D15 (CYP71D15) (Mentha piperita (Peppermint)).